We begin with the raw amino-acid sequence, 304 residues long: Lipid droplet-associated hydrolase (304 aa).

S119 serves as the catalytic Nucleophile. Active-site charge relay system residues include D250 and H279.

It belongs to the AB hydrolase superfamily. LDAH family.

It localises to the lipid droplet. The catalysed reaction is a cholesterol ester + H2O = cholesterol + a fatty acid + H(+). In terms of biological role, probable serine lipid hydrolase associated with lipid droplets. Has low cholesterol esterase activity. Appears to lack triglyceride lipase activity. Involved in cholesterol and triglyceride homeostasis; stimulates cellular triglyceride accumulation and cellular cholesterol release. This chain is Lipid droplet-associated hydrolase, found in Dictyostelium discoideum (Social amoeba).